We begin with the raw amino-acid sequence, 142 residues long: Hemoglobin subunit alpha (142 aa).

Residue Ser1 is modified to N-acetylserine. Residues 1-142 (SLSDKDKADV…LALALGQKYR (142 aa)) form the Globin domain. His58 contacts O2. Heme b is bound at residue His88.

Belongs to the globin family. Heterotetramer of two alpha chains and two beta chains. In terms of tissue distribution, red blood cells.

Involved in oxygen transport from gills to the various peripheral tissues. This is Hemoglobin subunit alpha (hba) from Catostomus clarkii (Desert sucker).